We begin with the raw amino-acid sequence, 75 residues long: Ferredoxin-thioredoxin reductase, variable chain (75 aa).

Residues 43-46 (QGRP) are interaction with ferredoxin.

Belongs to the ferredoxin thioredoxin reductase alpha subunit family. In terms of assembly, heterodimer of subunit A (variable subunit) and subunit B (catalytic subunit). Heterodimeric FTR forms a complex with ferredoxin and thioredoxin.

In terms of biological role, variable subunit of the ferredoxin-thioredoxin reductase (FTR), which catalyzes the two-electron reduction of thioredoxins by the electrons provided by reduced ferredoxin. This is Ferredoxin-thioredoxin reductase, variable chain (ftrV) from Synechocystis sp. (strain ATCC 27184 / PCC 6803 / Kazusa).